The chain runs to 160 residues: Nascent polypeptide-associated complex subunit alpha (160 aa).

The NAC-A/B domain occupies 10-75 (TKGEKKTREA…HSFDDIASRL (66 aa)). The 40-residue stretch at 120-159 (VNPKDVEVVMKETKASREKVVETLIATKNDLVSAVLELTT) folds into the UBA domain.

The protein belongs to the NAC-alpha family. In terms of assembly, part of the nascent polypeptide-associated complex (NAC), consisting of nacA and nacB.

The protein resides in the cytoplasm. It localises to the nucleus. Its function is as follows. Component of the nascent polypeptide-associated complex (NAC), a dynamic component of the ribosomal exit tunnel, protecting the emerging polypeptides from interaction with other cytoplasmic proteins to ensure appropriate nascent protein targeting. The NAC complex also promotes mitochondrial protein import by enhancing productive ribosome interactions with the outer mitochondrial membrane and blocks the inappropriate interaction of ribosomes translating non-secretory nascent polypeptides with translocation sites in the membrane of the endoplasmic reticulum. May also be involved in transcription regulation. In Dictyostelium discoideum (Social amoeba), this protein is Nascent polypeptide-associated complex subunit alpha (nacA).